Consider the following 148-residue polypeptide: Large ribosomal subunit protein uL15 (148 aa).

The tract at residues methionine 1 to leucine 57 is disordered. Gly residues-rich tracts occupy residues arginine 21 to asparagine 35 and alanine 42 to glycine 52.

Belongs to the universal ribosomal protein uL15 family. Part of the 50S ribosomal subunit.

Binds to the 23S rRNA. This Nitratidesulfovibrio vulgaris (strain ATCC 29579 / DSM 644 / CCUG 34227 / NCIMB 8303 / VKM B-1760 / Hildenborough) (Desulfovibrio vulgaris) protein is Large ribosomal subunit protein uL15.